The primary structure comprises 266 residues: Putative carbamate hydrolase RutD (266 aa).

The 114-residue stretch at 15–128 (AVLLSSGLGG…NAHSARCFDA (114 aa)) folds into the AB hydrolase-1 domain.

It belongs to the AB hydrolase superfamily. Hydrolase RutD family.

It catalyses the reaction carbamate + 2 H(+) = NH4(+) + CO2. Involved in pyrimidine catabolism. May facilitate the hydrolysis of carbamate, a reaction that can also occur spontaneously. The protein is Putative carbamate hydrolase RutD of Variovorax paradoxus (strain S110).